We begin with the raw amino-acid sequence, 649 residues long: Solute carrier family 22 member 17 (649 aa).

The tract at residues 1-70 is disordered; it reads MAPRVATGTP…GGDGLGSSLS (70 aa). A compositionally biased stretch (polar residues) spans 24-34; that stretch reads VEITPTSNGQV. The segment covering 47–57 has biased composition (basic and acidic residues); that stretch reads QGEREREREGE. Residues N134 and N143 are each glycosylated (N-linked (GlcNAc...) asparagine). Transmembrane regions (helical) follow at residues 211–231, 240–260, 265–285, 300–320, 330–350, 414–433, 448–468, 477–497, 526–546, 557–577, and 584–604; these read VILE…FLGY, GIVL…AAAG, VMAL…GVYL, ALAG…LALV, MITA…FLES, NIWK…HAIR, FYLC…FLGV, GILL…LGLW, FSVL…LLAA, GLGL…AQRL, and FLQH…IMLL.

This sequence belongs to the major facilitator (TC 2.A.1) superfamily. Organic cation transporter (TC 2.A.1.19) family. As to expression, expressed in brain.

It is found in the cell membrane. Its subcellular location is the vacuole membrane. Cell surface receptor for LCN2 (24p3) that plays a key role in iron homeostasis and transport. Able to bind iron-bound LCN2 (holo-24p3), followed by internalization of holo-24p3 and release of iron, thereby increasing intracellular iron concentration and leading to inhibition of apoptosis. Also binds iron-free LCN2 (apo-24p3), followed by internalization of apo-24p3 and its association with an intracellular siderophore, leading to iron chelation and iron transfer to the extracellular medium, thereby reducing intracellular iron concentration and resulting in apoptosis. The protein is Solute carrier family 22 member 17 (SLC22A17) of Homo sapiens (Human).